The sequence spans 360 residues: MPTATPATAPVTTTDVLIVGAGPVGLFAAFQAGVLGLKCELIDVLDRAGGQCTELYPEKPIYDIPAVPGCLAQDLVDRLLEQCAPFDFPMHFGQRAESVAEIPAPAASAGHAGHERLLVTTDGGKRFDVAAVLICAGAGAFAPQRVSLPEAAALEGRHVHYAVRDVSHFAGKRVIVAGGGDSALDWALALRKVAARVTLLHRREGFRAADGTVAEMRRAVAEGEMDFVVGMLGALRTEGADGGLSEVEVRTRDGSTVLPAEELVALYGLVSEPGPIAQWDLDMRAGRILVDTTTYESSRRGIFAAGDIAFYPNKQKLILSGFHEAALALRKAYHYAFPEKALVHVHTSNNAALKEKLTHA.

7 residues coordinate FAD: D43, Q51, Y56, A96, F141, D307, and S348.

The protein belongs to the ferredoxin--NADP reductase type 2 family. In terms of assembly, homodimer. FAD serves as cofactor.

The enzyme catalyses 2 reduced [2Fe-2S]-[ferredoxin] + NADP(+) + H(+) = 2 oxidized [2Fe-2S]-[ferredoxin] + NADPH. The chain is Ferredoxin--NADP reductase 1 from Cupriavidus taiwanensis (strain DSM 17343 / BCRC 17206 / CCUG 44338 / CIP 107171 / LMG 19424 / R1) (Ralstonia taiwanensis (strain LMG 19424)).